A 477-amino-acid chain; its full sequence is UDP-N-acetylmuramate--L-alanine ligase (477 aa).

122 to 128 (GTHGKTT) lines the ATP pocket.

The protein belongs to the MurCDEF family.

The protein resides in the cytoplasm. It carries out the reaction UDP-N-acetyl-alpha-D-muramate + L-alanine + ATP = UDP-N-acetyl-alpha-D-muramoyl-L-alanine + ADP + phosphate + H(+). It participates in cell wall biogenesis; peptidoglycan biosynthesis. Its function is as follows. Cell wall formation. The chain is UDP-N-acetylmuramate--L-alanine ligase from Xylella fastidiosa (strain M12).